The following is a 328-amino-acid chain: Phenylalanine--tRNA ligase alpha subunit (328 aa).

Glu-245 contributes to the Mg(2+) binding site.

The protein belongs to the class-II aminoacyl-tRNA synthetase family. Phe-tRNA synthetase alpha subunit type 1 subfamily. As to quaternary structure, tetramer of two alpha and two beta subunits. Mg(2+) is required as a cofactor.

The protein localises to the cytoplasm. The catalysed reaction is tRNA(Phe) + L-phenylalanine + ATP = L-phenylalanyl-tRNA(Phe) + AMP + diphosphate + H(+). The sequence is that of Phenylalanine--tRNA ligase alpha subunit from Helicobacter pylori (strain G27).